The sequence spans 284 residues: Tropomyosin (284 aa).

N-acetylmethionine is present on Met-1. Disordered regions lie at residues 1–49 (MDAI…NQKK) and 103–126 (EERL…SERM). Residues 1–284 (MDAIKKKMQA…DQAFSELSGF (284 aa)) are a coiled coil. Over residues 12 to 45 (KLEKDNAMDKADTLEQQNKEANLRAEKTEEEIRA) the composition is skewed to basic and acidic residues.

It belongs to the tropomyosin family. Homodimer. Expressed in leg muscle and chest protection muscle (at protein level).

Its function is as follows. Tropomyosin, in association with the troponin complex, plays a central role in the calcium dependent regulation of muscle contraction. The chain is Tropomyosin from Chionoecetes opilio (Atlantic snow crab).